Consider the following 272-residue polypeptide: uncharacterized protein (272 aa).

This sequence belongs to the chlamydial CPn_0389/CT_041/TC_0311 family.

This is an uncharacterized protein from Chlamydia pneumoniae (Chlamydophila pneumoniae).